The primary structure comprises 77 residues: Ribonuclease P protein component 1 (77 aa).

The protein belongs to the eukaryotic/archaeal RNase P protein component 1 family. In terms of assembly, consists of a catalytic RNA component and at least 4-5 protein subunits.

Its subcellular location is the cytoplasm. It carries out the reaction Endonucleolytic cleavage of RNA, removing 5'-extranucleotides from tRNA precursor.. Part of ribonuclease P, a protein complex that generates mature tRNA molecules by cleaving their 5'-ends. The protein is Ribonuclease P protein component 1 of Sulfurisphaera tokodaii (strain DSM 16993 / JCM 10545 / NBRC 100140 / 7) (Sulfolobus tokodaii).